A 173-amino-acid polypeptide reads, in one-letter code: NADH-quinone oxidoreductase subunit B 2 (173 aa).

[4Fe-4S] cluster-binding residues include C42, C43, C107, and C137.

This sequence belongs to the complex I 20 kDa subunit family. In terms of assembly, NDH-1 is composed of 14 different subunits. Subunits NuoB, C, D, E, F, and G constitute the peripheral sector of the complex. It depends on [4Fe-4S] cluster as a cofactor.

The protein resides in the cell inner membrane. It catalyses the reaction a quinone + NADH + 5 H(+)(in) = a quinol + NAD(+) + 4 H(+)(out). NDH-1 shuttles electrons from NADH, via FMN and iron-sulfur (Fe-S) centers, to quinones in the respiratory chain. Couples the redox reaction to proton translocation (for every two electrons transferred, four hydrogen ions are translocated across the cytoplasmic membrane), and thus conserves the redox energy in a proton gradient. This is NADH-quinone oxidoreductase subunit B 2 from Anaeromyxobacter dehalogenans (strain 2CP-C).